Consider the following 358-residue polypeptide: WD repeat-containing protein 53 (358 aa).

6 WD repeats span residues 1–38 (MAVKWTGGHSSPVLCLNASKEGLLASGAEGGDLTAWGE), 43–80 (LGHTRFQGADDVTSVLFSPSCPTKLYASHGETISVLDV), 85–123 (DSLDHFHVNEEEINCLSLNQTENLLASADDSGAIKILDL), 127–166 (KVIRSLKRHSNICSSVAFRPQRPQSLVSCGLDMQVMLWSL), 173–225 (WITN…RIFR), and 232–270 (EQELGFKGHTSGVSQVCFLPESYLLLTGGNDGKITLWDA). Positions 273–311 (EVEKKQKSPTKRTHRKKPKRGTCTKQGGNTNASVTDEEE) are disordered. The segment covering 279 to 294 (KSPTKRTHRKKPKRGT) has biased composition (basic residues). Over residues 295–306 (CTKQGGNTNASV) the composition is skewed to polar residues. One copy of the WD 7 repeat lies at 314 to 355 (NILPKLNIEHGEKVNWLLGTKIKGHQNILVADQTSCISVYPL).

It belongs to the WD repeat WDR53 family.

The polypeptide is WD repeat-containing protein 53 (WDR53) (Homo sapiens (Human)).